The primary structure comprises 874 residues: MAKKEVSASKPGNTKKDNVLLKKRKQQAVEKEEAEKEKEEGVSEDEFNVQGLIDPESDSDDEGAAAAEEEEEEEEQQQDVKELDLDKGEVISSDSDAEDFDSEEELNKLLGEEDDPSDYSSVGFSDEPKEDGDEQDEQDAFAAADAATDDDAFGDVKLKNLSITDPSKLEVRTKFSDGTPRIIKPEIEPVYDSDDSDAENFNTIGNIPISAYEEMPHIGYDINGKRIMRPAKGSALDQLLESIDLPQGWTGLLDQNTGAPLKITDEELELIRKIQQQENTDENINPYEPLNDWFTKNQEVMPLTAVPEPKRRFVPSKHEAKRVMKIVKAIREGRILTPEKAKELKEKETEEMNYDLWQNESEVPDHIMNLRAPKLPPPTNEESYNPPEEYLLNEEEKQKWLEQDPVDRERNFIPQKYSSLRLVPGYQDSVRERFERSLDLYLAPRLRKNKLNIDPESLIPELPSPKDLRPFPIKCSTVYEGHTGKIRTLSIDPQGLWLATGSDDGSVRIWEVLTGRQVFKAQLVNKEHNGEDHIESLEWNPNAQTGILAVCAGENIYLLVPPIFGFEIENTGKLRIESGWGYDTFGNTKQDLKVKGEDTKGDLDDDEEEEEEEEDDDDDEGQGKVKAHNSTAPAKKDVAKWINPNSSQQAMGISAIIQCRRTVKKISWHRKGDYFVTVSPDSKNTAVLIHQLSKHLSQSPFRKSKGVIMDAKFHPFKPQLFVASQRQIKIYDLAQQTLLKKLLPGVRLLSTIDLHPRGDNLLAASYDKRVLWHDLDLAATPYKTLRYHEKAVRQIKYHKGSLPLFASASDDGIIHVFHGTVYDDLMTNPLLVPLKKLSGHKVINQIGVLDIVWHPKEAWLFSAGADGTARLWTT.

Positions 1 to 148 (MAKKEVSASK…DAFAAADAAT (148 aa)) are disordered. Over residues 27-41 (QAVEKEEAEKEKEEG) the composition is skewed to basic and acidic residues. The segment covering 55–77 (PESDSDDEGAAAAEEEEEEEEQQ) has biased composition (acidic residues). Positions 78–89 (QDVKELDLDKGE) are enriched in basic and acidic residues. 2 stretches are compositionally biased toward acidic residues: residues 95-104 (SDAEDFDSEE) and 128-139 (PKEDGDEQDEQD). Residues 312–429 (RFVPSKHEAK…LRLVPGYQDS (118 aa)) are required for interaction with NOP7. Residues 429 to 465 (SVRERFERSLDLYLAPRLRKNKLNIDPESLIPELPSP) form a required for interaction with YTM1 region. 2 WD repeats span residues 481–520 (GHTG…QVFK) and 529–569 (NGED…FEIE). Residues 593 to 602 (KVKGEDTKGD) show a composition bias toward basic and acidic residues. The segment at 593–640 (KVKGEDTKGDLDDDEEEEEEEEDDDDDEGQGKVKAHNSTAPAKKDVAK) is disordered. Residues 603-620 (LDDDEEEEEEEEDDDDDE) show a composition bias toward acidic residues. 5 WD repeats span residues 658-700 (QCRR…SQSP), 703-741 (KSKG…LLKK), 744-783 (PGVR…TPYK), 787-827 (YHEK…DLMT), and 843-874 (INQI…LWTT).

This sequence belongs to the WD repeat BOP1/ERB1 family. Component of the NOP7 complex, composed of ERB1, NOP7 and YTM1. The complex is held together by ERB1, which interacts with NOP7 via its N-terminal domain and with YTM1 via a high-affinity interaction between the seven-bladed beta-propeller domains of the 2 proteins. The NOP7 complex associates with the 66S pre-ribosome.

Its subcellular location is the nucleus. The protein resides in the nucleolus. It localises to the nucleoplasm. Its function is as follows. Component of the NOP7 complex, which is required for maturation of the 25S and 5.8S ribosomal RNAs and formation of the 60S ribosome. The sequence is that of Ribosome biogenesis protein ERB1 from Lodderomyces elongisporus (strain ATCC 11503 / CBS 2605 / JCM 1781 / NBRC 1676 / NRRL YB-4239) (Yeast).